The primary structure comprises 106 residues: MSNTEHNVESKNVTDTLDEILRLQEDIQARIGSSNHNLETNFESIKDFVSRAHAYIPILNQISKDMIEICERTQALKKKTSQLELSDTNIEDGSTTSTPTTTNKSQ.

A disordered region spans residues 78 to 106; it reads KKTSQLELSDTNIEDGSTTSTPTTTNKSQ. Positions 82 to 93 are enriched in polar residues; that stretch reads QLELSDTNIEDG. Residues 94–106 are compositionally biased toward low complexity; it reads STTSTPTTTNKSQ.

It belongs to the BLOC1S6 family. In terms of assembly, homodimer (isoform 1). Component of the biogenesis of lysosome-related organelles complex-1 (BLOC-1) composed at least of blos-1, blos-2, blos-4, dsbn-1, glo-2, mutd-1 and snpn-1. Isoform 1 interacts with blos-1 and blos-4.

The protein localises to the cytoplasm. It localises to the endosome. Its function is as follows. Component of the biogenesis of lysosome-related organelles complex-1 (BLOC-1) involved in gut granule biogenesis. The polypeptide is Biogenesis of lysosome-related organelles complex 1 subunit 6 (glo-2) (Caenorhabditis elegans).